Consider the following 268-residue polypeptide: Deoxyuridine 5'-triphosphate nucleotidohydrolase (268 aa).

Substrate is bound by residues 172 to 174 (RSS) and 263 to 264 (FG).

It belongs to the dUTPase family. Mg(2+) serves as cofactor.

It catalyses the reaction dUTP + H2O = dUMP + diphosphate + H(+). Involved in nucleotide metabolism: produces dUMP, the immediate precursor of thymidine nucleotides and decreases the intracellular concentration of dUTP to avoid uracil incorporation into viral DNA. The protein is Deoxyuridine 5'-triphosphate nucleotidohydrolase of Suid herpesvirus 1 (strain Kaplan) (SuHV-1).